Here is a 610-residue protein sequence, read N- to C-terminus: Elongation factor 4 (610 aa).

The tr-type G domain maps to Glu12–Gln194. Residues Asp24–Thr29 and Asn141–Asp144 contribute to the GTP site.

Belongs to the TRAFAC class translation factor GTPase superfamily. Classic translation factor GTPase family. LepA subfamily.

It is found in the cell membrane. It catalyses the reaction GTP + H2O = GDP + phosphate + H(+). Functionally, required for accurate and efficient protein synthesis under certain stress conditions. May act as a fidelity factor of the translation reaction, by catalyzing a one-codon backward translocation of tRNAs on improperly translocated ribosomes. Back-translocation proceeds from a post-translocation (POST) complex to a pre-translocation (PRE) complex, thus giving elongation factor G a second chance to translocate the tRNAs correctly. Binds to ribosomes in a GTP-dependent manner. This Streptococcus thermophilus (strain ATCC BAA-250 / LMG 18311) protein is Elongation factor 4.